We begin with the raw amino-acid sequence, 273 residues long: Glutamate racemase (273 aa).

Substrate is bound by residues 17 to 18 (DS) and 49 to 50 (YG). Cys-80 serves as the catalytic Proton donor/acceptor. Residue 81-82 (NT) participates in substrate binding. Cys-190 acts as the Proton donor/acceptor in catalysis. Residue 191-192 (TH) coordinates substrate.

This sequence belongs to the aspartate/glutamate racemases family.

The catalysed reaction is L-glutamate = D-glutamate. It participates in cell wall biogenesis; peptidoglycan biosynthesis. In terms of biological role, provides the (R)-glutamate required for cell wall biosynthesis. This chain is Glutamate racemase, found in Corynebacterium glutamicum (strain ATCC 13032 / DSM 20300 / JCM 1318 / BCRC 11384 / CCUG 27702 / LMG 3730 / NBRC 12168 / NCIMB 10025 / NRRL B-2784 / 534).